A 24-amino-acid chain; its full sequence is Acidic phospholipase A2 4 (24 aa).

Belongs to the phospholipase A2 family. Group II subfamily. The cofactor is Ca(2+). Expressed by the venom gland.

The protein localises to the secreted. It catalyses the reaction a 1,2-diacyl-sn-glycero-3-phosphocholine + H2O = a 1-acyl-sn-glycero-3-phosphocholine + a fatty acid + H(+). PLA2 catalyzes the calcium-dependent hydrolysis of the 2-acyl groups in 3-sn-phosphoglycerides. This chain is Acidic phospholipase A2 4, found in Trimeresurus stejnegeri (Chinese green tree viper).